Consider the following 377-residue polypeptide: Probable sensor histidine kinase HK (377 aa).

Disordered regions lie at residues 1–169 (MAHP…RPAD) and 346–377 (LPTP…TSDQ). Residues 10-54 (RLQRRHGARSGSSRCRHRRPVPRRRSRSRPRWRAARAHRRHHRRS) are compositionally biased toward basic residues. The span at 84 to 98 (RRPDPRGGANTDHHA) shows a compositional bias: basic and acidic residues. Composition is skewed to basic residues over residues 99–115 (APRH…RRRD) and 137–146 (TTVRRRRQPR). One can recognise a Histidine kinase domain in the interval 146–350 (RITHPVGTAD…ELRITLPTPR (205 aa)). Residue histidine 149 is modified to Phosphohistidine; by autocatalysis. Basic and acidic residues predominate over residues 352 to 377 (PFHEELPRITSSDTKDPNREHDTSDQ).

Post-translationally, autophosphorylated.

The catalysed reaction is ATP + protein L-histidine = ADP + protein N-phospho-L-histidine.. Member of the two-component system HK/TcrA. Phosphorylates TcrA. The sequence is that of Probable sensor histidine kinase HK from Mycobacterium tuberculosis (strain CDC 1551 / Oshkosh).